The following is a 73-amino-acid chain: Large ribosomal subunit protein bL31 (73 aa).

Zn(2+) contacts are provided by Cys16, Cys18, Cys38, and Cys41.

It belongs to the bacterial ribosomal protein bL31 family. Type A subfamily. Part of the 50S ribosomal subunit. It depends on Zn(2+) as a cofactor.

Functionally, binds the 23S rRNA. The chain is Large ribosomal subunit protein bL31 from Vibrio parahaemolyticus serotype O3:K6 (strain RIMD 2210633).